A 240-amino-acid polypeptide reads, in one-letter code: Ribonuclease PH (240 aa).

Residues R86 and G124–R126 contribute to the phosphate site.

This sequence belongs to the RNase PH family. In terms of assembly, homohexameric ring arranged as a trimer of dimers.

It catalyses the reaction tRNA(n+1) + phosphate = tRNA(n) + a ribonucleoside 5'-diphosphate. Functionally, phosphorolytic 3'-5' exoribonuclease that plays an important role in tRNA 3'-end maturation. Removes nucleotide residues following the 3'-CCA terminus of tRNAs; can also add nucleotides to the ends of RNA molecules by using nucleoside diphosphates as substrates, but this may not be physiologically important. Probably plays a role in initiation of 16S rRNA degradation (leading to ribosome degradation) during starvation. The sequence is that of Ribonuclease PH from Rhodospirillum rubrum (strain ATCC 11170 / ATH 1.1.1 / DSM 467 / LMG 4362 / NCIMB 8255 / S1).